The following is a 1060-amino-acid chain: RNA-binding protein 27 (1060 aa).

Disordered regions lie at residues 80 to 143, 160 to 278, and 319 to 416; these read PLEP…DGKW, YDWR…PKRR, and PPPG…PPPL. Basic and acidic residues-rich tracts occupy residues 84–102 and 124–143; these read VKPE…KEEV and SRSE…DGKW. A compositionally biased stretch (basic residues) spans 165–185; that stretch reads GRSKSRSKSRGLSRSRSRSRG. The segment covering 186-211 has biased composition (basic and acidic residues); it reads RSKDRDPNRNVEHRERSKFKSERNDL. Low complexity-rich tracts occupy residues 225-235 and 255-268; these read SSEQYSSGAQS and SWSN…SSNS. Residues 273–301 form a C3H1-type zinc finger; the sequence is PPPKRRCRDYDERGFCVLGDLCQFDHGND. Composition is skewed to pro residues over residues 319–356 and 371–384; these read PPPG…PGPG and QPPP…PRPP. Over residues 387–402 the composition is skewed to polar residues; it reads QSSLINSRDQPGTSAV. Phosphothreonine is present on threonine 447. Arginine 455 carries the omega-N-methylarginine modification. The disordered stretch occupies residues 572–594; the sequence is LTKKPWLGKQGNNNQSKPGFLRK. The 75-residue stretch at 600 to 674 folds into the RRM domain; it reads TKLEVKKIPQ…RFIRVLWHRE (75 aa). The interval 754–775 is disordered; sequence HASTNQSDTSHLLNQTGGSSGE. Positions 755 to 770 are enriched in polar residues; sequence ASTNQSDTSHLLNQTG. Positions 810 to 887 form a coiled coil; sequence VQEVLKKKQE…KDELKTSSTV (78 aa). Serine 928 carries the phosphoserine modification. The interval 943 to 982 is disordered; it reads GRGKTISSQGRGRGRGRGRGRGSLNHMVVDHRPKALPGGG. 2 positions are modified to phosphoserine: serine 1012 and serine 1020. The disordered stretch occupies residues 1014–1060; the sequence is HKPKVPSISTETEEEEVKEEETETSDLFLHDDDDEDEDEYESRSWRR. Composition is skewed to acidic residues over residues 1024 to 1037 and 1044 to 1053; these read ETEE…ETET and DDDDEDEDEY.

It is found in the cytoplasm. Its subcellular location is the nucleus speckle. Functionally, may be involved in the turnover of nuclear polyadenylated (pA+) RNA. In Mus musculus (Mouse), this protein is RNA-binding protein 27.